The following is a 352-amino-acid chain: MVVDDSAVVRQVLVGVLNEAPGIEVIATAADPLLAIEKMRQQWPDVIVLDVEMPRMDGITFLRKIMSERPTPVVICSTLTEKGARVTMDALAAGAVAVVTKPRLGLKQFLTDSADELVATVRSAARANVKRLAARVTAAPLEAEVKHTADVILPAQTGRALAQTTERIVAIGTSTGGTQALEEVLTALPRVCPGIVIVQHMPEKFTAAFAARLNGLCQIAVKEAANNDRVMPGRALIAPGGKHLLLRRSGAQYFVEVLEGPPVNRHRPSVDVLFRSAARAAGSNALGIIMTGMGDDGAAGLLEMRQAGARTIAQDEHTSIVFGMPKEAIKRGGADRILPLGAMAREIVTQLQ.

Positions 1–116 constitute a Response regulatory domain; sequence MVVDDSAVVR…KQFLTDSADE (116 aa). Asp50 bears the 4-aspartylphosphate mark. Residues 162 to 352 form the CheB-type methylesterase domain; the sequence is AQTTERIVAI…MAREIVTQLQ (191 aa). Active-site residues include Ser174, His200, and Asp296.

Belongs to the CheB family. In terms of processing, phosphorylated by CheA. Phosphorylation of the N-terminal regulatory domain activates the methylesterase activity.

Its subcellular location is the cytoplasm. It carries out the reaction [protein]-L-glutamate 5-O-methyl ester + H2O = L-glutamyl-[protein] + methanol + H(+). The enzyme catalyses L-glutaminyl-[protein] + H2O = L-glutamyl-[protein] + NH4(+). In terms of biological role, involved in chemotaxis. Part of a chemotaxis signal transduction system that modulates chemotaxis in response to various stimuli. Catalyzes the demethylation of specific methylglutamate residues introduced into the chemoreceptors (methyl-accepting chemotaxis proteins or MCP) by CheR. Also mediates the irreversible deamidation of specific glutamine residues to glutamic acid. In Xanthomonas campestris pv. campestris (strain ATCC 33913 / DSM 3586 / NCPPB 528 / LMG 568 / P 25), this protein is Protein-glutamate methylesterase/protein-glutamine glutaminase 2.